Consider the following 429-residue polypeptide: Chaperone SurA (429 aa).

Residues 1–19 (MKKTLLALLIASVMQSALA) form the signal peptide. PpiC domains follow at residues 172–273 (RTEY…KLVD) and 283–381 (VEQY…LVEG).

It localises to the periplasm. The catalysed reaction is [protein]-peptidylproline (omega=180) = [protein]-peptidylproline (omega=0). Its function is as follows. Chaperone involved in the correct folding and assembly of outer membrane proteins. Recognizes specific patterns of aromatic residues and the orientation of their side chains, which are found more frequently in integral outer membrane proteins. May act in both early periplasmic and late outer membrane-associated steps of protein maturation. The protein is Chaperone SurA of Chromobacterium violaceum (strain ATCC 12472 / DSM 30191 / JCM 1249 / CCUG 213 / NBRC 12614 / NCIMB 9131 / NCTC 9757 / MK).